Reading from the N-terminus, the 67-residue chain is Protein AaeX (67 aa).

Helical transmembrane passes span 10–30 (FGLS…LFFV) and 43–63 (FVWH…YLLF).

This sequence belongs to the AaeX family.

Its subcellular location is the cell membrane. The protein is Protein AaeX of Pectobacterium carotovorum subsp. carotovorum (strain PC1).